The sequence spans 432 residues: Enolase (432 aa).

Glutamine 167 contacts (2R)-2-phosphoglycerate. Glutamate 209 serves as the catalytic Proton donor. Aspartate 246, glutamate 291, and aspartate 318 together coordinate Mg(2+). Residues lysine 343, arginine 372, serine 373, and lysine 394 each contribute to the (2R)-2-phosphoglycerate site. The active-site Proton acceptor is the lysine 343.

It belongs to the enolase family. Component of the RNA degradosome, a multiprotein complex involved in RNA processing and mRNA degradation. Mg(2+) is required as a cofactor.

The protein localises to the cytoplasm. The protein resides in the secreted. It is found in the cell surface. The catalysed reaction is (2R)-2-phosphoglycerate = phosphoenolpyruvate + H2O. Its pathway is carbohydrate degradation; glycolysis; pyruvate from D-glyceraldehyde 3-phosphate: step 4/5. In terms of biological role, catalyzes the reversible conversion of 2-phosphoglycerate (2-PG) into phosphoenolpyruvate (PEP). It is essential for the degradation of carbohydrates via glycolysis. The chain is Enolase from Aliivibrio salmonicida (strain LFI1238) (Vibrio salmonicida (strain LFI1238)).